Here is a 280-residue protein sequence, read N- to C-terminus: Ribosomal RNA small subunit methyltransferase A (280 aa).

Asparagine 28, leucine 30, glycine 55, glutamate 77, aspartate 103, and asparagine 122 together coordinate S-adenosyl-L-methionine.

This sequence belongs to the class I-like SAM-binding methyltransferase superfamily. rRNA adenine N(6)-methyltransferase family. RsmA subfamily.

The protein localises to the cytoplasm. It catalyses the reaction adenosine(1518)/adenosine(1519) in 16S rRNA + 4 S-adenosyl-L-methionine = N(6)-dimethyladenosine(1518)/N(6)-dimethyladenosine(1519) in 16S rRNA + 4 S-adenosyl-L-homocysteine + 4 H(+). Functionally, specifically dimethylates two adjacent adenosines (A1518 and A1519) in the loop of a conserved hairpin near the 3'-end of 16S rRNA in the 30S particle. May play a critical role in biogenesis of 30S subunits. This Dinoroseobacter shibae (strain DSM 16493 / NCIMB 14021 / DFL 12) protein is Ribosomal RNA small subunit methyltransferase A.